Reading from the N-terminus, the 582-residue chain is MKLRCPAAYGTSHVDDANMKKLRSRITTDGLDRAPHRAFMRAMGLDDAAIAKPMVGIVSMKGEQTPCNMTHDFQVAAAKTGIEEAGGTPREFSTVSVSDGISMNHEGMKFSLFSRELIADSIEAVVHGLAYDALIGYGGCDKTLPGVMMGMVRCNVPSIFIYGGSSLPGRVDGRTLTVLDSYEAVGSFMTGEIDSATLERIERACLPTIGACAGQFTANTMGMVSEAMGLTIPNVSMVPGVYAERAQISRRAGRLIMEMLERGGPLPRDIVTRKSLENGAAIVAATGGSTNAALHLPAIANEAGIAFTIDDVGEVFARTPLIGNLRPGGKYTAKDVHDIGGAAVVIQELIRTGHIDGNCITITGRTLAEEYGAANAPDGEVVYAASAPIMPDGGVAVLKGNLCPDGAVIKVAGLKSQFFEGVARVFEDEEACVAAVRDRSYKAGEVLVIRNEGPVGGPGMREMLGVTALIYGQGMGEKVALITDGRFSGATRGMCIGYVSPEAFVGGPLALVRDGDKIRIDATNRRMDMLVDEPELAARRRDWKPRPPRHRAGALAKYARLVGQAPGGAVTHEGPAEWPWFE.

C67 is a binding site for [2Fe-2S] cluster. Residue D99 participates in Mg(2+) binding. C140 serves as a coordination point for [2Fe-2S] cluster. D141 and K142 together coordinate Mg(2+). An N6-carboxylysine modification is found at K142. [2Fe-2S] cluster is bound at residue C212. E462 is a Mg(2+) binding site. The Proton acceptor role is filled by S488.

This sequence belongs to the IlvD/Edd family. Homodimer. It depends on [2Fe-2S] cluster as a cofactor. Mg(2+) is required as a cofactor.

It carries out the reaction (2R)-2,3-dihydroxy-3-methylbutanoate = 3-methyl-2-oxobutanoate + H2O. The enzyme catalyses (2R,3R)-2,3-dihydroxy-3-methylpentanoate = (S)-3-methyl-2-oxopentanoate + H2O. It participates in amino-acid biosynthesis; L-isoleucine biosynthesis; L-isoleucine from 2-oxobutanoate: step 3/4. The protein operates within amino-acid biosynthesis; L-valine biosynthesis; L-valine from pyruvate: step 3/4. Its function is as follows. Functions in the biosynthesis of branched-chain amino acids. Catalyzes the dehydration of (2R,3R)-2,3-dihydroxy-3-methylpentanoate (2,3-dihydroxy-3-methylvalerate) into 2-oxo-3-methylpentanoate (2-oxo-3-methylvalerate) and of (2R)-2,3-dihydroxy-3-methylbutanoate (2,3-dihydroxyisovalerate) into 2-oxo-3-methylbutanoate (2-oxoisovalerate), the penultimate precursor to L-isoleucine and L-valine, respectively. This Bradyrhizobium diazoefficiens (strain JCM 10833 / BCRC 13528 / IAM 13628 / NBRC 14792 / USDA 110) protein is Dihydroxy-acid dehydratase 3.